Here is an 879-residue protein sequence, read N- to C-terminus: Phosphoenolpyruvate carboxylase (879 aa).

Residues H138 and K545 contribute to the active site.

This sequence belongs to the PEPCase type 1 family. The cofactor is Mg(2+).

It carries out the reaction oxaloacetate + phosphate = phosphoenolpyruvate + hydrogencarbonate. Its function is as follows. Forms oxaloacetate, a four-carbon dicarboxylic acid source for the tricarboxylic acid cycle. This chain is Phosphoenolpyruvate carboxylase, found in Histophilus somni (strain 2336) (Haemophilus somnus).